The sequence spans 537 residues: Cytochrome P450 monooxygenase claR (537 aa).

A helical membrane pass occupies residues 23–43 (VVTITEVALGIITLYLLGSYI). C454 serves as a coordination point for heme.

Belongs to the cytochrome P450 family. Heme is required as a cofactor.

The protein resides in the membrane. The enzyme catalyses (2E)-geranylhydroquinone + reduced [NADPH--hemoprotein reductase] + O2 = wigandol + oxidized [NADPH--hemoprotein reductase] + 2 H2O + H(+). Its pathway is secondary metabolite biosynthesis; terpenoid biosynthesis. In terms of biological role, cytochrome P450 monooxygenase; part of the gene cluster that mediates the biosynthesis of clavilactone A, a meroterpenoid that features a unique benzo-fused ten-membered carbocyclic ring unit with an alpha,beta-epoxy-gamma-lactone moiety, forming an intriguing 10/5/3 tricyclic nested skeleton. ClaR, ClaS and ClaT are sufficient to produce clavilactone A. ClaR acts as a macrocyclase to catalyze the oxidative cyclization of the isopentenyl to the nonterpenoid moieties to form the benzo-fused macrocycle, leading to wigantol. The biosynthesis begins with the prenyltransferase claS that transfers geranyl pyrophosphate (GPP) to hydroquinone to produces geranylhydroquinone. The cytochrome P450 monooxygenase claR then catalyzes the diradical coupling reaction between the intramolecular hydroquinone and allyl moieties to form the benzo-fused ten-membered carbocyclic ring unit of wigantol. Finally the cytochrome P450 monooxygenase claT exquisitely and stereoselectively assembles the alpha,beta-epoxy-gamma-lactone moiety, producing clavilactone A via arnebinol A. This Ampulloclitocybe clavipes (Club foot) protein is Cytochrome P450 monooxygenase claR.